A 121-amino-acid polypeptide reads, in one-letter code: MQDTIFLKGMRFYGYHGALSAENEIGQIFKVDVTLKVDLAEAGRTDNVIDTVHYGEVFEEVKSIMEGKAVNLLEHLAERIANRINSQYNRVMETKVRITKENPPIPGHYDGVGIEIVRENK.

Residues glutamate 22, tyrosine 54, and leucine 73–glutamate 74 contribute to the substrate site. Lysine 100 acts as the Proton donor/acceptor in catalysis.

This sequence belongs to the DHNA family. As to quaternary structure, homooctamer. Four molecules assemble into a ring, and two rings come together to give a cylinder with a hole of at least 13 a diameter.

It carries out the reaction 7,8-dihydroneopterin = 6-hydroxymethyl-7,8-dihydropterin + glycolaldehyde. The enzyme catalyses 7,8-dihydroneopterin = 7,8-dihydromonapterin. It functions in the pathway cofactor biosynthesis; tetrahydrofolate biosynthesis; 2-amino-4-hydroxy-6-hydroxymethyl-7,8-dihydropteridine diphosphate from 7,8-dihydroneopterin triphosphate: step 3/4. Functionally, catalyzes the conversion of 7,8-dihydroneopterin to 6-hydroxymethyl-7,8-dihydropterin. Can also catalyze the epimerization of carbon 2' of dihydroneopterin to dihydromonapterin. This chain is Dihydroneopterin aldolase (folB), found in Staphylococcus aureus (strain COL).